A 91-amino-acid polypeptide reads, in one-letter code: UPF0358 protein Sca_0738 (91 aa).

This sequence belongs to the UPF0358 family.

In Staphylococcus carnosus (strain TM300), this protein is UPF0358 protein Sca_0738.